A 444-amino-acid polypeptide reads, in one-letter code: Trigger factor (444 aa).

The 86-residue stretch at 165–250 (GDFAKFDFEG…LHEIQELKIP (86 aa)) folds into the PPIase FKBP-type domain.

It belongs to the FKBP-type PPIase family. Tig subfamily.

The protein resides in the cytoplasm. The enzyme catalyses [protein]-peptidylproline (omega=180) = [protein]-peptidylproline (omega=0). Functionally, involved in protein export. Acts as a chaperone by maintaining the newly synthesized protein in an open conformation. Functions as a peptidyl-prolyl cis-trans isomerase. The chain is Trigger factor from Campylobacter jejuni subsp. jejuni serotype O:6 (strain 81116 / NCTC 11828).